Reading from the N-terminus, the 684-residue chain is MSALDFLVELGTEELPPKALAKLADAFCAGIEKGLKDAGLGFAKAQAYAAPRRLAVLVEQLATQQPDRSINLDGPPMQAAFDAHGEPTQAALGFARKCGVDLAEIDRSGPKLKFSRTIEGQPATQLLPGIVEASLNDLPIPKRMRWAARKEEFVRPTQWLVMLFGEQVIDCEILAQRAGRESRGHRFHSPGQVHISKPSSYLEDLRGAHVIADFAERRELIAKRVEQLASEQNGSAIVPPALLDEVTALVEWPVPLVCSFEERFLEVPQEALISTMQDNQKYFCLLDTNGKLLPRFITVANIESKDPAQIVSGNEKVVRPRLTDAEFFFKQDKKQPLERFNDRLKNVVFQAQLGTVFDKAERVSRLAGLIAERTGGDKARAMRAGLLSKADLATEMVGEFPEMQGIAGYYYALNEGEPEDVALALNEQYMPRGAGGELPSTLTGAAVAVADKLDTLVGIFGIGMLPTGSKDPYALRRAALGVLRILIEKQLDLNLVEAVNFAIGQFGTQVKSAGLADQVLEFIFDRLRARYEDEGVDVAAYLSVRAVQPGSALDFDQRVQAVQAFRTLPEAEALAAANKRVSNLLAKFEAKLPEAVEPRWFDNATEFSLYSALQQAEQAVQPLAAARQYREALERLAHLRGPVDAFFEAVLVNAEDASVRANRYALLARLRGLFLGVADISALG.

Belongs to the class-II aminoacyl-tRNA synthetase family. Tetramer of two alpha and two beta subunits.

It localises to the cytoplasm. The enzyme catalyses tRNA(Gly) + glycine + ATP = glycyl-tRNA(Gly) + AMP + diphosphate. The sequence is that of Glycine--tRNA ligase beta subunit from Stutzerimonas stutzeri (strain A1501) (Pseudomonas stutzeri).